A 95-amino-acid chain; its full sequence is Aspartyl/glutamyl-tRNA(Asn/Gln) amidotransferase subunit C (95 aa).

Belongs to the GatC family. As to quaternary structure, heterotrimer of A, B and C subunits.

The catalysed reaction is L-glutamyl-tRNA(Gln) + L-glutamine + ATP + H2O = L-glutaminyl-tRNA(Gln) + L-glutamate + ADP + phosphate + H(+). It catalyses the reaction L-aspartyl-tRNA(Asn) + L-glutamine + ATP + H2O = L-asparaginyl-tRNA(Asn) + L-glutamate + ADP + phosphate + 2 H(+). In terms of biological role, allows the formation of correctly charged Asn-tRNA(Asn) or Gln-tRNA(Gln) through the transamidation of misacylated Asp-tRNA(Asn) or Glu-tRNA(Gln) in organisms which lack either or both of asparaginyl-tRNA or glutaminyl-tRNA synthetases. The reaction takes place in the presence of glutamine and ATP through an activated phospho-Asp-tRNA(Asn) or phospho-Glu-tRNA(Gln). The sequence is that of Aspartyl/glutamyl-tRNA(Asn/Gln) amidotransferase subunit C from Campylobacter fetus subsp. fetus (strain 82-40).